Reading from the N-terminus, the 381-residue chain is Ribosome assembly 1 protein (381 aa).

M1 is modified (N-acetylmethionine). 3 disordered regions span residues 1 to 38 (MNYN…IKRQ), 164 to 216 (KDTF…DRDE), and 350 to 381 (FGSS…TRNK). A Phosphoserine modification is found at S172. A compositionally biased stretch (basic residues) spans 359 to 371 (NHYKPNYKNRKPN).

It localises to the nucleus. In terms of biological role, involved in a late nucleoplasmic step of 60S ribosomal subunit assembly. The protein is Ribosome assembly 1 protein (RSA1) of Saccharomyces cerevisiae (strain ATCC 204508 / S288c) (Baker's yeast).